The following is a 27-amino-acid chain: Cupiennin-4b (27 aa).

Q27 carries the glutamine amide modification.

In terms of tissue distribution, expressed by the venom gland.

It localises to the secreted. The polypeptide is Cupiennin-4b (Cupiennius salei (American wandering spider)).